The following is a 157-amino-acid chain: Large ribosomal subunit protein uL15 (157 aa).

The segment at 1 to 64 (MKLNEIPAVP…MPLQRRLPKR (64 aa)) is disordered. Positions 21-31 (RGPGSGNGKTA) are enriched in gly residues.

Belongs to the universal ribosomal protein uL15 family. Part of the 50S ribosomal subunit.

Binds to the 23S rRNA. The chain is Large ribosomal subunit protein uL15 from Magnetococcus marinus (strain ATCC BAA-1437 / JCM 17883 / MC-1).